The chain runs to 272 residues: ATP phosphoribosyltransferase regulatory subunit (272 aa).

It belongs to the class-II aminoacyl-tRNA synthetase family. HisZ subfamily. In terms of assembly, heteromultimer composed of HisG and HisZ subunits.

It is found in the cytoplasm. The protein operates within amino-acid biosynthesis; L-histidine biosynthesis; L-histidine from 5-phospho-alpha-D-ribose 1-diphosphate: step 1/9. Required for the first step of histidine biosynthesis. May allow the feedback regulation of ATP phosphoribosyltransferase activity by histidine. The chain is ATP phosphoribosyltransferase regulatory subunit from Staphylococcus aureus (strain MRSA252).